The chain runs to 275 residues: Undecaprenyl-diphosphatase (275 aa).

A run of 7 helical transmembrane segments spans residues 8-28 (WTIVHYFVLGLVQGITEPIPI), 45-65 (ARGLSFEIFVNLASLLAVLII), 92-112 (FMFVVYLVLATIPVGIVGVLF), 119-139 (FIGEDGTTVVGITLLITAAAI), 197-217 (FSFLLYIPVSLGSSILEIPNI), 225-245 (ELWIPYLVAFITAFIASYFAL), and 255-275 (GNLKYFAYYCVIVGVLVLIFL).

The protein belongs to the UppP family.

It is found in the cell membrane. The catalysed reaction is di-trans,octa-cis-undecaprenyl diphosphate + H2O = di-trans,octa-cis-undecaprenyl phosphate + phosphate + H(+). In terms of biological role, catalyzes the dephosphorylation of undecaprenyl diphosphate (UPP). Confers resistance to bacitracin. The chain is Undecaprenyl-diphosphatase from Oceanobacillus iheyensis (strain DSM 14371 / CIP 107618 / JCM 11309 / KCTC 3954 / HTE831).